The chain runs to 315 residues: Cytochrome f (315 aa).

Positions methionine 1–alanine 36 are cleaved as a signal peptide. 4 residues coordinate heme: phenylalanine 37, cysteine 57, cysteine 60, and histidine 61. The helical transmembrane segment at isoleucine 281 to lysine 301 threads the bilayer.

Belongs to the cytochrome f family. The 4 large subunits of the cytochrome b6-f complex are cytochrome b6, subunit IV (17 kDa polypeptide, PetD), cytochrome f and the Rieske protein, while the 4 small subunits are PetG, PetL, PetM and PetN. The complex functions as a dimer. Requires heme as cofactor.

The protein resides in the cellular thylakoid membrane. In terms of biological role, component of the cytochrome b6-f complex, which mediates electron transfer between photosystem II (PSII) and photosystem I (PSI), cyclic electron flow around PSI, and state transitions. The chain is Cytochrome f from Acaryochloris marina (strain MBIC 11017).